The following is a 134-amino-acid chain: Small ribosomal subunit protein uS8c (134 aa).

This sequence belongs to the universal ribosomal protein uS8 family. In terms of assembly, part of the 30S ribosomal subunit.

It localises to the plastid. Its subcellular location is the chloroplast. Functionally, one of the primary rRNA binding proteins, it binds directly to 16S rRNA central domain where it helps coordinate assembly of the platform of the 30S subunit. This is Small ribosomal subunit protein uS8c (rps8) from Ipomoea purpurea (Common morning glory).